A 223-amino-acid polypeptide reads, in one-letter code: Small ribosomal subunit protein uS3 (223 aa).

The region spanning 39–107 (IRQFLRKKPS…EVWLEIAEIK (69 aa)) is the KH type-2 domain.

The protein belongs to the universal ribosomal protein uS3 family. As to quaternary structure, part of the 30S ribosomal subunit. Forms a tight complex with proteins S10 and S14.

Binds the lower part of the 30S subunit head. Binds mRNA in the 70S ribosome, positioning it for translation. The polypeptide is Small ribosomal subunit protein uS3 (Chlamydia pneumoniae (Chlamydophila pneumoniae)).